We begin with the raw amino-acid sequence, 783 residues long: Type 4 coupling protein DotL (783 aa).

Residues 47–67 (VSYYFSEAATFLLIMGGIFFL) form a helical membrane-spanning segment. The ATPase domain stretch occupies residues 100-500 (NIARGITFFG…ICMKLEDPTE (401 aa)). Residues 671–773 (VEGALTIFSK…SAKISAEREK (103 aa)) are interaction with IcmS/IcmW.

In terms of assembly, the T4BSS is a complex nanomachine composed of several subcomplexes. This subunit is part of the Type IV Coupling Complex (T4CC), a subcomplex composed of the DotLMNYZ core and the IcmSW-LvgA adapter subunits, linked by the C-terminal tail of DotL. Six DotLMNYZ hetero-pentameric units may assemble into a hexameric nanomachine, forming an inner membrane channel for effectors to pass through. Interacts directly with DotM. Interacts directly, via its C-terminal region, with the type IV adapter proteins IcmS and IcmW. Also interacts with DotN and LvgA via its C-terminal region.

The protein localises to the cell inner membrane. Component of the Dot/Icm type IVB secretion system (T4BSS), which is used to inject bacterial effector proteins into eukaryotic host cells. Part of a subcomplex which recruits effector proteins and delivers them to the core transmembrane subcomplex. Plays a central role in the assembly of the subcomplex. Required for the recruitment of IcmS and IcmW to the inner membrane and for the translocation of adapter-dependent substrates. May have ATPase activity. This Legionella pneumophila subsp. pneumophila (strain Philadelphia 1 / ATCC 33152 / DSM 7513) protein is Type 4 coupling protein DotL.